The sequence spans 210 residues: Small ribosomal subunit protein uS5 (210 aa).

Residues 1 to 23 (MARTPSSDRPERGRGGERGDRPN) show a composition bias toward basic and acidic residues. Residues 1-40 (MARTPSSDRPERGRGGERGDRPNRGRGGAEQTPREREESE) form a disordered region. Residues 41–104 (FVDKLVHINR…EQAKRNMIKI (64 aa)) enclose the S5 DRBM domain.

The protein belongs to the universal ribosomal protein uS5 family. As to quaternary structure, part of the 30S ribosomal subunit. Contacts proteins S4 and S8.

With S4 and S12 plays an important role in translational accuracy. Functionally, located at the back of the 30S subunit body where it stabilizes the conformation of the head with respect to the body. This is Small ribosomal subunit protein uS5 from Paramagnetospirillum magneticum (strain ATCC 700264 / AMB-1) (Magnetospirillum magneticum).